The sequence spans 404 residues: MSVTLDLSRMAPSMSKEGGDAPKALINLSGLTRAQLLVALTESGVAEHGKAKMRATQIFRWMHHRGVTDFALMTDVAKETRARLAERFTVSRPEVVERQVSKDGTRKWLIRMAPGIEVETVYIPSVGRAGALCVSSQVGCTLNCSFCHTGTQALVRNLTAAEIVAQVQIAKDDLAEWPSDKEDRLLSNIVFMGMGEPLYNLGHVADAIEIISDNEGIGISRRRITVSTSGVVPQLEALGDKTQAMLAISLHATNDALRDVLVPLNKKYPLEDLMAGVRAYPGLSNARRVTFEYVMLKGVNDSPDEARALVKLIKGIPAKINLIPFNPWPGTDYVCSDWAAIEAFGAILNKAGYSSPIRTPRGRDILAACGQLKSESEKVRASAMRKLSMAAMAGVLDDDDEAAA.

Glutamate 119 functions as the Proton acceptor in the catalytic mechanism. The 233-residue stretch at 126–358 (VGRAGALCVS…NKAGYSSPIR (233 aa)) folds into the Radical SAM core domain. Cysteine 133 and cysteine 369 are oxidised to a cystine. Positions 140, 144, and 147 each coordinate [4Fe-4S] cluster. S-adenosyl-L-methionine-binding positions include 195–196 (GE), serine 227, 249–251 (SLH), and asparagine 326. Residue cysteine 369 is the S-methylcysteine intermediate of the active site.

It belongs to the radical SAM superfamily. RlmN family. [4Fe-4S] cluster serves as cofactor.

Its subcellular location is the cytoplasm. The catalysed reaction is adenosine(2503) in 23S rRNA + 2 reduced [2Fe-2S]-[ferredoxin] + 2 S-adenosyl-L-methionine = 2-methyladenosine(2503) in 23S rRNA + 5'-deoxyadenosine + L-methionine + 2 oxidized [2Fe-2S]-[ferredoxin] + S-adenosyl-L-homocysteine. It catalyses the reaction adenosine(37) in tRNA + 2 reduced [2Fe-2S]-[ferredoxin] + 2 S-adenosyl-L-methionine = 2-methyladenosine(37) in tRNA + 5'-deoxyadenosine + L-methionine + 2 oxidized [2Fe-2S]-[ferredoxin] + S-adenosyl-L-homocysteine. In terms of biological role, specifically methylates position 2 of adenine 2503 in 23S rRNA and position 2 of adenine 37 in tRNAs. m2A2503 modification seems to play a crucial role in the proofreading step occurring at the peptidyl transferase center and thus would serve to optimize ribosomal fidelity. This chain is Dual-specificity RNA methyltransferase RlmN, found in Caulobacter sp. (strain K31).